A 332-amino-acid polypeptide reads, in one-letter code: 2,3-diketo-L-gulonate reductase (332 aa).

His44 serves as the catalytic Proton donor. Residues 168 to 174 (ITMVDMS), 224 to 225 (WK), and 304 to 306 (GHE) contribute to the NAD(+) site.

Belongs to the LDH2/MDH2 oxidoreductase family. DlgD subfamily. As to quaternary structure, homodimer.

It is found in the cytoplasm. It carries out the reaction 3-dehydro-L-gulonate + NAD(+) = 2,3-dioxo-L-gulonate + NADH + H(+). It catalyses the reaction 3-dehydro-L-gulonate + NADP(+) = 2,3-dioxo-L-gulonate + NADPH + H(+). Catalyzes the reduction of 2,3-diketo-L-gulonate in the presence of NADH, to form 3-keto-L-gulonate. The polypeptide is 2,3-diketo-L-gulonate reductase (Escherichia coli O8 (strain IAI1)).